Reading from the N-terminus, the 465-residue chain is Ribulose bisphosphate carboxylase large chain (465 aa).

Residue Lys-4 is modified to N6,N6,N6-trimethyllysine. Residues Asn-113 and Thr-163 each contribute to the substrate site. The active-site Proton acceptor is Lys-165. Substrate is bound at residue Lys-167. 3 residues coordinate Mg(2+): Lys-191, Asp-193, and Glu-194. N6-carboxylysine is present on Lys-191. Catalysis depends on His-284, which acts as the Proton acceptor. 3 residues coordinate substrate: Arg-285, His-317, and Ser-369.

Belongs to the RuBisCO large chain family. Type I subfamily. In terms of assembly, heterohexadecamer of 8 large chains and 8 small chains; disulfide-linked. The disulfide link is formed within the large subunit homodimers. It depends on Mg(2+) as a cofactor. Post-translationally, the disulfide bond which can form in the large chain dimeric partners within the hexadecamer appears to be associated with oxidative stress and protein turnover.

It localises to the plastid. The protein resides in the chloroplast. It catalyses the reaction 2 (2R)-3-phosphoglycerate + 2 H(+) = D-ribulose 1,5-bisphosphate + CO2 + H2O. It carries out the reaction D-ribulose 1,5-bisphosphate + O2 = 2-phosphoglycolate + (2R)-3-phosphoglycerate + 2 H(+). In terms of biological role, ruBisCO catalyzes two reactions: the carboxylation of D-ribulose 1,5-bisphosphate, the primary event in carbon dioxide fixation, as well as the oxidative fragmentation of the pentose substrate in the photorespiration process. Both reactions occur simultaneously and in competition at the same active site. The polypeptide is Ribulose bisphosphate carboxylase large chain (Eucommia ulmoides (Hardy rubber tree)).